We begin with the raw amino-acid sequence, 367 residues long: Phosphoribosylaminoimidazole-succinocarboxamide synthase (367 aa).

Belongs to the SAICAR synthetase family.

It carries out the reaction 5-amino-1-(5-phospho-D-ribosyl)imidazole-4-carboxylate + L-aspartate + ATP = (2S)-2-[5-amino-1-(5-phospho-beta-D-ribosyl)imidazole-4-carboxamido]succinate + ADP + phosphate + 2 H(+). It functions in the pathway purine metabolism; IMP biosynthesis via de novo pathway; 5-amino-1-(5-phospho-D-ribosyl)imidazole-4-carboxamide from 5-amino-1-(5-phospho-D-ribosyl)imidazole-4-carboxylate: step 1/2. This Shewanella sp. (strain MR-4) protein is Phosphoribosylaminoimidazole-succinocarboxamide synthase.